Here is a 398-residue protein sequence, read N- to C-terminus: Cystathionine gamma-lyase (398 aa).

At S50 the chain carries Phosphoserine. Residues R61, Y113, and R118 each contribute to the substrate site. K211 is modified (N6-(pyridoxal phosphate)lysine). E338 contacts substrate.

Belongs to the trans-sulfuration enzymes family. As to quaternary structure, homotetramer. Interacts with CALM in a calcium-dependent manner. The cofactor is pyridoxal 5'-phosphate.

The protein localises to the cytoplasm. It catalyses the reaction L,L-cystathionine + H2O = 2-oxobutanoate + L-cysteine + NH4(+). The enzyme catalyses L-homoserine = 2-oxobutanoate + NH4(+). The catalysed reaction is L-selenocystathionine + H2O = L-selenocysteine + 2-oxobutanoate + NH4(+). It carries out the reaction L-cysteine + H2O = hydrogen sulfide + pyruvate + NH4(+) + H(+). It catalyses the reaction L-homocysteine + H2O = 2-oxobutanoate + hydrogen sulfide + NH4(+) + H(+). The protein operates within amino-acid biosynthesis; L-cysteine biosynthesis; L-cysteine from L-homocysteine and L-serine: step 2/2. Functionally, catalyzes the last step in the trans-sulfuration pathway from L-methionine to L-cysteine in a pyridoxal-5'-phosphate (PLP)-dependent manner, which consists on cleaving the L,L-cystathionine molecule into L-cysteine, ammonia and 2-oxobutanoate. Part of the L-cysteine derived from the trans-sulfuration pathway is utilized for biosynthesis of the ubiquitous antioxidant glutathione. Besides its role in the conversion of L-cystathionine into L-cysteine, it utilizes L-cysteine and L-homocysteine as substrates (at much lower rates than L,L-cystathionine) to produce hydrogen sulfide (H2S). In vitro, it converts two L-cysteine molecules into lanthionine and H2S, and two L-homocysteine molecules to homolanthionine and H2S, which can be particularly relevant under conditions of severe hyperhomocysteinemia. Lanthionine and homolanthionine are structural homologs of L,L-cystathionine that differ by the absence or presence of an extra methylene group, respectively. Acts as a cysteine-protein sulfhydrase by mediating sulfhydration of target proteins: sulfhydration consists of converting -SH groups into -SSH on specific cysteine residues of target proteins such as GAPDH, PTPN1 and NF-kappa-B subunit RELA, thereby regulating their function. By generating the gasotransmitter H2S, it participates in a number of physiological processes such as vasodilation, bone protection, and inflammation. Plays an essential role in myogenesis by contributing to the biogenesis of H2S in skeletal muscle tissue. Can also accept homoserine as substrate. Catalyzes the elimination of selenocystathionine (which can be derived from the diet) to yield selenocysteine, ammonia and 2-oxobutanoate. The sequence is that of Cystathionine gamma-lyase (Cth) from Rattus norvegicus (Rat).